The chain runs to 249 residues: MKLVLLRHGESEWNKENLFTGWMDVDLSETGKAEAASAGITLKQKGYDFDVCYTSYLKRAIHTLNLALDEMDRVWLPVVKSWKLNERHYGTLQGLNKSETAERYGEEQVKIWRRSYDIAPPLLKEEDERNPRFQEQYRQEKCEILPLGESLKDTIARVVPYYNEVILKDMMAGKRVLIAAHGNSLRALMKYLEDMSPEDILNVNLPTGIPLVYELDEEGKFISKEYLGDAEYVKAKIEKVSAQGKVTIE.

Substrate-binding positions include 7–14 (RHGESEWN), 20–21 (TG), Arg-59, 86–89 (ERHY), Lys-97, 113–114 (RR), and 182–183 (GN). Catalysis depends on His-8, which acts as the Tele-phosphohistidine intermediate. Glu-86 acts as the Proton donor/acceptor in catalysis.

Belongs to the phosphoglycerate mutase family. BPG-dependent PGAM subfamily.

The catalysed reaction is (2R)-2-phosphoglycerate = (2R)-3-phosphoglycerate. It participates in carbohydrate degradation; glycolysis; pyruvate from D-glyceraldehyde 3-phosphate: step 3/5. Its function is as follows. Catalyzes the interconversion of 2-phosphoglycerate and 3-phosphoglycerate. The polypeptide is 2,3-bisphosphoglycerate-dependent phosphoglycerate mutase (Lachnoclostridium phytofermentans (strain ATCC 700394 / DSM 18823 / ISDg) (Clostridium phytofermentans)).